The primary structure comprises 302 residues: N-acetyl-D-glucosamine kinase (302 aa).

Residues 4 to 11 and 133 to 140 contribute to the ATP site; these read GFDVGGTK and GFGGGFIY. Zn(2+) contacts are provided by H157, C177, C179, and C184.

The protein belongs to the ROK (NagC/XylR) family. NagK subfamily.

It catalyses the reaction N-acetyl-D-glucosamine + ATP = N-acetyl-D-glucosamine 6-phosphate + ADP + H(+). The protein operates within cell wall biogenesis; peptidoglycan recycling. Catalyzes the phosphorylation of N-acetyl-D-glucosamine (GlcNAc) derived from cell-wall degradation, yielding GlcNAc-6-P. The protein is N-acetyl-D-glucosamine kinase of Vibrio parahaemolyticus serotype O3:K6 (strain RIMD 2210633).